The sequence spans 113 residues: Antisense of depressing factor protein 1 (113 aa).

Residues 1-11 are compositionally biased toward basic residues; the sequence is MGKCSMKKKGV. Positions 1–35 are disordered; it reads MGKCSMKKKGVGKNVGVGKKVQKKRSISTAERKRT.

Belongs to the ADF1 family.

It is found in the nucleus. Functionally, transcriptional repressor which negatively regulates transcription of FYV5 by binding to the promoter on the sense strand. In Saccharomyces cerevisiae (strain ATCC 204508 / S288c) (Baker's yeast), this protein is Antisense of depressing factor protein 1.